Reading from the N-terminus, the 120-residue chain is Large ribosomal subunit protein uL18 (120 aa).

Belongs to the universal ribosomal protein uL18 family. Part of the 50S ribosomal subunit; part of the 5S rRNA/L5/L18/L25 subcomplex. Contacts the 5S and 23S rRNAs.

This is one of the proteins that bind and probably mediate the attachment of the 5S RNA into the large ribosomal subunit, where it forms part of the central protuberance. The polypeptide is Large ribosomal subunit protein uL18 (Bordetella bronchiseptica (strain ATCC BAA-588 / NCTC 13252 / RB50) (Alcaligenes bronchisepticus)).